Here is a 1616-residue protein sequence, read N- to C-terminus: Vitellogenin-1 (1616 aa).

The first 19 residues, 1 to 19 (MRSIIIASIVALAIAFSPA), serve as a signal peptide directing secretion. The Vitellogenin domain occupies 24-689 (FEPKIDYHYK…EKNSFLLKDL (666 aa)). N-linked (GlcNAc...) asparagine glycosylation occurs at N1270. The region spanning 1310-1479 (SVCKVQKNQI…SYLLKNEECE (170 aa)) is the VWFD domain. Cystine bridges form between C1312–C1442 and C1334–C1478. Positions 1505-1514 (SFEETYDYEQ) are enriched in acidic residues. The segment at 1505 to 1531 (SFEETYDYEQENTNKKQKNQRSQKKSD) is disordered.

Expressed in the intestine of adult hermaphrodites.

It localises to the secreted. Its function is as follows. Precursor of the egg-yolk proteins that are sources of nutrients during embryonic development. Together with other vitellogenins, may play a role in modulating life-span, acting via induction of autophagy and lysosomal lipolysis. The sequence is that of Vitellogenin-1 (vit-1) from Caenorhabditis elegans.